We begin with the raw amino-acid sequence, 469 residues long: ATP synthase subunit beta (469 aa).

156–163 (GGAGVGKT) is an ATP binding site.

This sequence belongs to the ATPase alpha/beta chains family. In terms of assembly, F-type ATPases have 2 components, CF(1) - the catalytic core - and CF(0) - the membrane proton channel. CF(1) has five subunits: alpha(3), beta(3), gamma(1), delta(1), epsilon(1). CF(0) has three main subunits: a(1), b(2) and c(9-12). The alpha and beta chains form an alternating ring which encloses part of the gamma chain. CF(1) is attached to CF(0) by a central stalk formed by the gamma and epsilon chains, while a peripheral stalk is formed by the delta and b chains.

It localises to the cell membrane. It carries out the reaction ATP + H2O + 4 H(+)(in) = ADP + phosphate + 5 H(+)(out). In terms of biological role, produces ATP from ADP in the presence of a proton gradient across the membrane. The catalytic sites are hosted primarily by the beta subunits. The protein is ATP synthase subunit beta of Lactococcus lactis subsp. cremoris (strain SK11).